The primary structure comprises 1344 residues: DEAD-box ATP-dependent RNA helicase FANCM (1344 aa).

Residues 39–61 (SSSHFTPLANPPITANLTKPPAK) are disordered. Residues 124-292 (ITKTALFSNT…GIIDNLQIST (169 aa)) enclose the Helicase ATP-binding domain. Residue 137–144 (LPTGLGKT) participates in ATP binding. Positions 240–243 (DEAH) match the DEAH box motif. The 172-residue stretch at 450–621 (KLSKMLEILV…SFNFHPSPRM (172 aa)) folds into the Helicase C-terminal domain. Disordered stretches follow at residues 765-790 (VNTS…KDYE), 1110-1148 (EVSS…TQAE), 1183-1218 (YSAG…SNQD), and 1307-1344 (KQRS…LGLW). A compositionally biased stretch (acidic residues) spans 1118-1135 (SADENEDVTGDSFEDSFI). Over residues 1207-1218 (TPKTTNSESNQD) the composition is skewed to polar residues. Over residues 1308–1318 (QRSEAKEKEDA) the composition is skewed to basic and acidic residues.

Belongs to the DEAD box helicase family. DEAH subfamily. FANCM sub-subfamily.

The protein resides in the nucleus. It catalyses the reaction ATP + H2O = ADP + phosphate + H(+). Its function is as follows. Involved in ordered homologous recombination (HR) events in somatic and meiotic cells. Involved in the suppression of spontaneous HR events in somatic cells. Has an opposite function to the DNA binding cofactor MHF1 which promotes spontaneous HR. Functions in replicative repair independently of MHF1 and in a parallel pathway to the endonuclease MUS81. Acts in the same pathway as the two DNA-binding cofactors MHF1 and MHF2 to restrain class II meiotic crossover (CO), and acts exclusively with MHF1 and MHF2 during meiosis to repair DNA interstrand cross-links (ICLs). This common pathway is in parallel to the pathway that involves the RECQ4A helicase. Seems to be involved in the stabilization of recombination intermediates. Involved in DNA double-strand break (DSB) repair during meiosis. Required for synthesis-dependent strand annealing (SDSA) and to a lesser extent for single-strand annealing (SSA). May process meiotic DSB repair intermediates, possibly D-loops, driving them toward noncrossover (NCO) resolution. The protein is DEAD-box ATP-dependent RNA helicase FANCM of Arabidopsis thaliana (Mouse-ear cress).